A 797-amino-acid polypeptide reads, in one-letter code: RAS guanyl-releasing protein 1 (797 aa).

Basic and acidic residues predominate over residues 1–12 (MGTLGKAREAPR). The disordered stretch occupies residues 1–23 (MGTLGKAREAPRKPSHGCRAASK). The N-terminal Ras-GEF domain occupies 53 to 176 (LGHLAKGASL…RLIDTTQINA (124 aa)). Residues 57–110 (AKGASLDDLIDSCIQSFDADGNLCRSNQLLQVMLTMHRIVISSAELLQKVITLY) form a ras exchanger motif region; required for transforming activity region. Threonine 184 is subject to Phosphothreonine; by PKC. A Ras-GEF domain is found at 205–436 (EPEELSEHLT…YELSYAREPR (232 aa)). EF-hand domains lie at 470-505 (HVQR…FPFS) and 506-532 (FCVM…ASSI). Positions 483, 485, 487, 489, and 494 each coordinate Ca(2+). The Phorbol-ester/DAG-type zinc finger occupies 541–591 (PHNFQETTYLKPTFCDNCAGFLWGVIKQGYRCKDCGMNCHKQCKDLVVFEC). The segment at 673-694 (TQTESQPWIGSEGPSGPFVLSS) is disordered. Positions 686–694 (PSGPFVLSS) are suppress the PT region-mediated translocation to plasma membrane. The PT region; mediates the BCR-dependent translocation to plasma membrane stretch occupies residues 718–797 (LVRKRAFVKW…LAQMEQGDCS (80 aa)). A coiled-coil region spans residues 746–786 (PTYQELEQEINTLKADNDALKIQLKYAQKKIESLQLEKSNH).

This sequence belongs to the RASGRP family. In terms of assembly, homodimer. Forms a signaling complex with DGKZ and HRAS. Interacts with F-actin. Interacts with SKAP1. Expressed in brain with higher expression in cerebellum, cerebral cortex and amygdala. Expressed in the hematopoietic system. Expressed in T-cells (at protein level). Expressed in NK cells (at protein level).

The protein resides in the cytoplasm. It is found in the cytosol. It localises to the cell membrane. Its subcellular location is the golgi apparatus membrane. The protein localises to the endoplasmic reticulum membrane. With respect to regulation, autoinhibited. Activated by diacylglycerol and calcium binding, which induces a conformational change releasing the autoinhibitory state. Regulated by DGKA. Regulated by DGKZ. Regulated by PLC gamma and F-actin polymerization. Functionally, functions as a calcium- and diacylglycerol (DAG)-regulated nucleotide exchange factor specifically activating Ras through the exchange of bound GDP for GTP. Activates the Erk/MAP kinase cascade. Regulates T-cell/B-cell development, homeostasis and differentiation by coupling T-lymphocyte/B-lymphocyte antigen receptors to Ras. Regulates NK cell cytotoxicity and ITAM-dependent cytokine production by activation of Ras-mediated ERK and JNK pathways. Functions in mast cell degranulation and cytokine secretion, regulating FcERI-evoked allergic responses. May also function in differentiation of other cell types. The polypeptide is RAS guanyl-releasing protein 1 (RASGRP1) (Homo sapiens (Human)).